The primary structure comprises 396 residues: Acetate kinase (396 aa).

Residue Asn-8 coordinates Mg(2+). Residue Lys-15 coordinates ATP. Residue Arg-90 participates in substrate binding. Asp-147 serves as the catalytic Proton donor/acceptor. Residues His-207–Gly-211, Asp-283–Arg-285, and Gly-330–Asn-334 contribute to the ATP site. Residue Glu-384 participates in Mg(2+) binding.

The protein belongs to the acetokinase family. In terms of assembly, homodimer. The cofactor is Mg(2+). Mn(2+) serves as cofactor.

Its subcellular location is the cytoplasm. It carries out the reaction acetate + ATP = acetyl phosphate + ADP. It functions in the pathway metabolic intermediate biosynthesis; acetyl-CoA biosynthesis; acetyl-CoA from acetate: step 1/2. Catalyzes the formation of acetyl phosphate from acetate and ATP. Can also catalyze the reverse reaction. This chain is Acetate kinase, found in Lacticaseibacillus paracasei (strain ATCC 334 / BCRC 17002 / CCUG 31169 / CIP 107868 / KCTC 3260 / NRRL B-441) (Lactobacillus paracasei).